The chain runs to 169 residues: Succinate dehydrogenase cytochrome b560 subunit, mitochondrial (169 aa).

The transit peptide at 1-29 (MAALLLRHVGRHCLRAHFSPQLCIRNAVP) directs the protein to the mitochondrion. Topologically, residues 30–65 (LGTTAKEEMERFWNKNIGSNRPLSPHITIYSWSLPM) are mitochondrial matrix. The chain crosses the membrane as a helical span at residues 66–90 (AMSICHRGTGIALSAGVSLFGMSAL). At 91 to 110 (LLPGNFESYLELVKSLCLGP) the chain is on the mitochondrial intermembrane side. A helical membrane pass occupies residues 111–139 (ALIHTAKFALVFPLMYHTWNGIRHLMWDL). Heme b is bound at residue His127. At 140–146 (GKGLKIP) the chain is on the mitochondrial matrix side. The helical transmembrane segment at 147–167 (QLYQSGVVVLVLTVLSSMGLA) threads the bilayer. The Mitochondrial intermembrane segment spans residues 168–169 (AM).

Belongs to the cytochrome b560 family. Component of complex II composed of four subunits: the flavoprotein (FP) SDHA, iron-sulfur protein (IP) SDHB, and a cytochrome b560 composed of SDHC and SDHD. The cofactor is heme b.

Its subcellular location is the mitochondrion inner membrane. It participates in carbohydrate metabolism; tricarboxylic acid cycle. Its function is as follows. Membrane-anchoring subunit of succinate dehydrogenase (SDH) that is involved in complex II of the mitochondrial electron transport chain and is responsible for transferring electrons from succinate to ubiquinone (coenzyme Q). SDH also oxidizes malate to the non-canonical enol form of oxaloacetate, enol-oxaloacetate. Enol-oxaloacetate, which is a potent inhibitor of the succinate dehydrogenase activity, is further isomerized into keto-oxaloacetate. The protein is Succinate dehydrogenase cytochrome b560 subunit, mitochondrial (SDHC) of Homo sapiens (Human).